Reading from the N-terminus, the 179-residue chain is Inner membrane-spanning protein YciB (179 aa).

The next 5 membrane-spanning stretches (helical) occupy residues 22–42 (IYVA…FTWF), 50–70 (MTLI…VFHN), 76–96 (WKVT…QLVL), 121–141 (LAWA…AFWL), and 149–169 (FKVF…GVYI).

This sequence belongs to the YciB family.

The protein resides in the cell inner membrane. Functionally, plays a role in cell envelope biogenesis, maintenance of cell envelope integrity and membrane homeostasis. This chain is Inner membrane-spanning protein YciB, found in Serratia proteamaculans (strain 568).